Consider the following 812-residue polypeptide: cAMP-regulated phosphoprotein 21 (812 aa).

The tract at residues 1-130 is disordered; it reads MSEQGDLNQA…KDKTSEKPKI (130 aa). Serine 2 is modified (N-acetylserine). Residues 9–25 show a composition bias toward low complexity; the sequence is QAIAEEGGTEQETATPE. Residues 32–58 are a coiled coil; it reads ESLDEEEKLELQRRLEAQNQERRKSKS. Position 33 is a phosphoserine (serine 33). Residues 40–53 are compositionally biased toward basic and acidic residues; it reads LELQRRLEAQNQER. Position 56 is a phosphoserine (serine 56). Positions 90–100 are enriched in low complexity; sequence IHLQLSSFSSL. Over residues 102–130 the composition is skewed to basic and acidic residues; that stretch reads EEDKSRKDDSEREKEKDKNKDKTSEKPKI. Residue serine 134 is modified to Phosphoserine. The 64-residue stretch at 164–227 folds into the R3H domain; that stretch reads RMILLKMEQE…SVIINKTSST (64 aa). Positions 228-300 constitute an SUZ domain; the sequence is RIPEQRFCEH…VRERIFAHDS (73 aa). The disordered stretch occupies residues 246-281; sequence SQKRFILKRDNSSIDKEDNQQNRMHPFRDDRRSKSI. Phosphoserine is present on serine 300. Disordered regions lie at residues 332–436, 485–544, and 561–632; these read RGNR…PLVS, HTGQ…MAGP, and LSRQ…QQPP. Residues 339–349 show a composition bias toward low complexity; the sequence is GRTSGSRQSSS. Basic and acidic residues predominate over residues 351-360; that stretch reads NELKWSDHQR. A compositionally biased stretch (polar residues) spans 361 to 373; sequence AWSSTDSDSSNRN. Residues serine 363 and serine 383 each carry the phosphoserine modification. The segment covering 391–423 has biased composition (low complexity); that stretch reads TRGDSTSSTRSTGKLSKAGSESSSSAGSSGSLS. Serine 562 is modified (phosphoserine). Over residues 582-602 the composition is skewed to polar residues; it reads LMPQPAQQPSYVIASTGQQLP. The span at 619-632 shows a compositional bias: pro residues; that stretch reads QPPPSPQGFVQQPP. At arginine 655 the chain carries Asymmetric dimethylarginine.

As to quaternary structure, interacts with CALM1. In terms of processing, phosphorylation at Ser-56 favors interaction with CALM1. Post-translationally, isoform 1 is methylated by CARM1 at Arg-655 in immature thymocytes. Isoform 2 is expressed in brain. Isoform 1 is present in immature thymocytes (at protein level).

Its subcellular location is the cytoplasm. Functionally, isoform 2 may act as a competitive inhibitor of calmodulin-dependent enzymes such as calcineurin in neurons. The chain is cAMP-regulated phosphoprotein 21 (ARPP21) from Homo sapiens (Human).